Reading from the N-terminus, the 155-residue chain is SsrA-binding protein (155 aa).

This sequence belongs to the SmpB family.

The protein resides in the cytoplasm. Functionally, required for rescue of stalled ribosomes mediated by trans-translation. Binds to transfer-messenger RNA (tmRNA), required for stable association of tmRNA with ribosomes. tmRNA and SmpB together mimic tRNA shape, replacing the anticodon stem-loop with SmpB. tmRNA is encoded by the ssrA gene; the 2 termini fold to resemble tRNA(Ala) and it encodes a 'tag peptide', a short internal open reading frame. During trans-translation Ala-aminoacylated tmRNA acts like a tRNA, entering the A-site of stalled ribosomes, displacing the stalled mRNA. The ribosome then switches to translate the ORF on the tmRNA; the nascent peptide is terminated with the 'tag peptide' encoded by the tmRNA and targeted for degradation. The ribosome is freed to recommence translation, which seems to be the essential function of trans-translation. In Streptococcus equi subsp. equi (strain 4047), this protein is SsrA-binding protein.